Reading from the N-terminus, the 248-residue chain is MTETARTTIDASEIEHFSRIAAQWWDPQGKFRPLHKFNPTRLAYIKEKVCAKFNRDPNAPRPLEGLRFLDIGCGGGLLCEPMARLGATVIGADASATNIEVAKIHAAQSSLDIDYRATTAEALADAGEKFDVVLNMEVVEHVSDVDLFMSATSAMVKPGGLMFVATINRTLKAYGLAIIGAEYVLRWLPRGTHQYEKLVRPEELEAAFSKADLRLIDKLGVTYNPLADSWNRSRDMDVNYMVLAERPA.

S-adenosyl-L-methionine is bound by residues arginine 41, glycine 72, aspartate 93, and methionine 136.

It belongs to the methyltransferase superfamily. UbiG/COQ3 family.

It catalyses the reaction a 3-demethylubiquinol + S-adenosyl-L-methionine = a ubiquinol + S-adenosyl-L-homocysteine + H(+). It carries out the reaction a 3-(all-trans-polyprenyl)benzene-1,2-diol + S-adenosyl-L-methionine = a 2-methoxy-6-(all-trans-polyprenyl)phenol + S-adenosyl-L-homocysteine + H(+). The protein operates within cofactor biosynthesis; ubiquinone biosynthesis. In terms of biological role, O-methyltransferase that catalyzes the 2 O-methylation steps in the ubiquinone biosynthetic pathway. This chain is Ubiquinone biosynthesis O-methyltransferase, found in Brucella abortus (strain 2308).